Here is a 195-residue protein sequence, read N- to C-terminus: dCTP deaminase (195 aa).

DCTP contacts are provided by residues 110-115, D128, 136-138, Y171, K178, and Q182; these read RSSLAR and VLE. Residue E138 is the Proton donor/acceptor of the active site. Positions 169–179 are enriched in basic and acidic residues; sequence RPYSSRKDAKY. A disordered region spans residues 169 to 195; it reads RPYSSRKDAKYKNQQSAVASRIDEDKE.

It belongs to the dCTP deaminase family. As to quaternary structure, homotrimer.

The catalysed reaction is dCTP + H2O + H(+) = dUTP + NH4(+). Its pathway is pyrimidine metabolism; dUMP biosynthesis; dUMP from dCTP (dUTP route): step 1/2. Catalyzes the deamination of dCTP to dUTP. This chain is dCTP deaminase, found in Haemophilus influenzae (strain 86-028NP).